Here is a 215-residue protein sequence, read N- to C-terminus: ATP phosphoribosyltransferase (215 aa).

It belongs to the ATP phosphoribosyltransferase family. Short subfamily. Heteromultimer composed of HisG and HisZ subunits.

It is found in the cytoplasm. The enzyme catalyses 1-(5-phospho-beta-D-ribosyl)-ATP + diphosphate = 5-phospho-alpha-D-ribose 1-diphosphate + ATP. The protein operates within amino-acid biosynthesis; L-histidine biosynthesis; L-histidine from 5-phospho-alpha-D-ribose 1-diphosphate: step 1/9. Its function is as follows. Catalyzes the condensation of ATP and 5-phosphoribose 1-diphosphate to form N'-(5'-phosphoribosyl)-ATP (PR-ATP). Has a crucial role in the pathway because the rate of histidine biosynthesis seems to be controlled primarily by regulation of HisG enzymatic activity. The polypeptide is ATP phosphoribosyltransferase (Cyanothece sp. (strain PCC 7425 / ATCC 29141)).